The sequence spans 114 residues: Small ribosomal subunit protein bS6 (114 aa).

It belongs to the bacterial ribosomal protein bS6 family.

Its function is as follows. Binds together with bS18 to 16S ribosomal RNA. The polypeptide is Small ribosomal subunit protein bS6 (Protochlamydia amoebophila (strain UWE25)).